The sequence spans 117 residues: Large ribosomal subunit protein bL20c (117 aa).

The protein belongs to the bacterial ribosomal protein bL20 family.

It is found in the plastid. Its subcellular location is the chloroplast. In terms of biological role, binds directly to 23S ribosomal RNA and is necessary for the in vitro assembly process of the 50S ribosomal subunit. It is not involved in the protein synthesizing functions of that subunit. The chain is Large ribosomal subunit protein bL20c from Acorus calamus (Sweet flag).